The following is a 226-amino-acid chain: Ribonuclease 3 (226 aa).

Residues 5 to 127 (IFQRGDPIGH…IVAAIYLDCG (123 aa)) enclose the RNase III domain. Glutamate 40 provides a ligand contact to Mg(2+). Aspartate 44 is an active-site residue. Mg(2+) contacts are provided by aspartate 113 and glutamate 116. Glutamate 116 is an active-site residue. In terms of domain architecture, DRBM spans 154–224 (DPKTRLQEWL…ATLVIAQLDS (71 aa)).

Belongs to the ribonuclease III family. In terms of assembly, homodimer. Requires Mg(2+) as cofactor.

Its subcellular location is the cytoplasm. The catalysed reaction is Endonucleolytic cleavage to 5'-phosphomonoester.. Functionally, digests double-stranded RNA. Involved in the processing of primary rRNA transcript to yield the immediate precursors to the large and small rRNAs (23S and 16S). Processes some mRNAs, and tRNAs when they are encoded in the rRNA operon. Processes pre-crRNA and tracrRNA of type II CRISPR loci if present in the organism. This chain is Ribonuclease 3, found in Xanthomonas oryzae pv. oryzae (strain KACC10331 / KXO85).